A 1589-amino-acid polypeptide reads, in one-letter code: Sterile alpha motif domain-containing protein 9 (1589 aa).

Positions 14–78 (WTKEDVNQWL…ELFKELRKTA (65 aa)) constitute an SAM domain. The disordered stretch occupies residues 83-135 (IQTSKMGKPSKNAPKDQTVSQKERRETSKQKQKGKENPDMANPSAMSTTAKGS). Residues 103 to 120 (QKERRETSKQKQKGKENP) are compositionally biased toward basic and acidic residues.

In terms of assembly, interacts with RGL2. Interacts with EEA1. (Microbial infection) Interacts with myxoma virus protein M062. Widely expressed. Very low levels are detected in skeletal muscle. Not detected in brain. Down-regulated in aggressive fibromatosis, as well as in breast and colon cancers. Up-regulated in fibroblasts from patients with normophosphatemic tumoral calcinosis (NFTC).

It localises to the cytoplasm. In terms of biological role, double-stranded nucleic acid binding that acts as an antiviral factor by playing an essential role in the formation of cytoplasmic antiviral granules. May play a role in the inflammatory response to tissue injury and the control of extra-osseous calcification, acting as a downstream target of TNF-alpha signaling. Involved in the regulation of EGR1, in coordination with RGL2. May be involved in endosome fusion. This Homo sapiens (Human) protein is Sterile alpha motif domain-containing protein 9 (SAMD9).